The sequence spans 348 residues: uncharacterized protein (348 aa).

This is an uncharacterized protein from Caenorhabditis elegans.